A 764-amino-acid polypeptide reads, in one-letter code: Zygote defective protein 12 (764 aa).

A compositionally biased stretch (polar residues) spans M1–A20. Residues M1–R33 form a disordered region. Residues M1–G236 are interaction with dli-1. The Calponin-homology (CH) domain maps to R43–Q169. Coiled coils occupy residues L244 to T405 and G436 to I692. Residues A732 to I752 form a helical membrane-spanning segment.

This sequence belongs to the hook family. Homodimer. Interacts with the dynein subunit dli-1 via its N-terminus. May interact with microtubules.

Its subcellular location is the nucleus membrane. It localises to the cytoplasm. The protein resides in the cytoskeleton. It is found in the microtubule organizing center. The protein localises to the centrosome. Functionally, cytoskeletal linker protein, which is essential for attachment of the centrosome to the nucleus. Required for dynein localization to the nuclear envelope. The sequence is that of Zygote defective protein 12 (zyg-12) from Caenorhabditis briggsae.